Consider the following 159-residue polypeptide: Cytochrome b6-f complex subunit 4 (159 aa).

The next 3 membrane-spanning stretches (helical) occupy residues 35–55 (ILIFGVVILGTIFGVIALAVL), 93–113 (LLGVVLMAAIPIGLALVPFIE), and 127–147 (ATAVFLIGTVVTMYLGIGAMI).

Belongs to the cytochrome b family. PetD subfamily. As to quaternary structure, the 4 large subunits of the cytochrome b6-f complex are cytochrome b6, subunit IV (17 kDa polypeptide, PetD), cytochrome f and the Rieske protein, while the 4 small subunits are PetG, PetL, PetM and PetN. The complex functions as a dimer.

It localises to the cell inner membrane. Its function is as follows. Component of the cytochrome b6-f complex, which mediates electron transfer between photosystem II (PSII) and photosystem I (PSI), cyclic electron flow around PSI, and state transitions. The chain is Cytochrome b6-f complex subunit 4 from Gloeobacter violaceus (strain ATCC 29082 / PCC 7421).